Reading from the N-terminus, the 1255-residue chain is Structural polyprotein (1255 aa).

The tract at residues 1-33 (MFPFQPMYPMQPMPYRNPFAAPRRPWFPRTDPF) is necessary for nucleocapsid assembly and virus assembly. Residues 33–68 (FLAMQVQELTRSMANLTFKQRRDAPPEGPPAKKPKR) are host transcription inhibition. A Supraphysiological nuclear export signal motif is present at residues 41–48 (LTRSMANL). The segment at 44-119 (SMANLTFKQR…KKPGKRQRMV (76 aa)) is disordered. A Nuclear localization signal motif is present at residues 64–68 (KKPKR). The span at 80 to 92 (GKKKKNQGKKKAK) shows a compositional bias: basic residues. Positions 91 to 127 (AKTGPPNPKAQSGNKKKPNKKPGKRQRMVMKLESDKT) are binding to the viral RNA. Phosphothreonine is present on Thr93. A compositionally biased stretch (basic residues) spans 104 to 118 (NKKKPNKKPGKRQRM). The segment at 112–126 (PGKRQRMVMKLESDK) is ribosome-binding. Ser124 bears the Phosphoserine mark. Residues 126-275 (KTFPIMLEGK…KYTPENCEQW (150 aa)) enclose the Peptidase S3 domain. Position 127 is a phosphothreonine (Thr127). His152 functions as the Charge relay system in the catalytic mechanism. The interaction with spike glycoprotein E2 stretch occupies residues 168 to 173 (KKASKY). Active-site charge relay system residues include Asp174 and Ser226. Residues 260–264 (EKGVT) form an interaction with spike glycoprotein E2 region. The tract at residues 276-287 (SLVTTMCLLANV) is functions as an uncleaved signal peptide for the precursor of protein E3/E2. Over 276 to 701 (SLVTTMCLLA…HYYHRYPMST (426 aa)) the chain is Extracellular. Intrachain disulfides connect Cys282/Cys291, Cys353/Cys457, Cys356/Cys361, Cys424/Cys438, Cys485/Cys600, Cys534/Cys560, and Cys536/Cys554. Asn286 is a glycosylation site (N-linked (GlcNAc...) asparagine; by host). An N-linked (GlcNAc...) asparagine; by host glycan is attached at Asn652. Residues 702–722 (ILGLSICAAIVTVSVAASTWL) form a helical membrane-spanning segment. The Cytoplasmic segment spans residues 723–757 (FCKSRVSCLTPYRLTPNARMPLCLAVLCCARTARA). An interaction with the capsid protein region spans residues 725–729 (KSRVS). Residues Cys730, Cys750, and Cys751 are each lipidated (S-palmitoyl cysteine; by host). The segment at 730 to 750 (CLTPYRLTPNARMPLCLAVLC) is transient transmembrane before p62-6K protein processing. A disulfide bridge links Cys730 with Cys751. Over 758–769 (ETTWESLDHLWN) the chain is Extracellular. Residues 770-790 (NNQQMFWIQLLIPLAALIVVT) form a helical membrane-spanning segment. Arg791 is a topological domain (cytoplasmic). A helical membrane pass occupies residues 792–812 (LLKCVCCVVPFLVVAGAAGAG). Topologically, residues 813 to 1225 (AYEHATTMPS…SKTAWTWLTS (413 aa)) are extracellular. 4 cysteine pairs are disulfide-bonded: Cys862-Cys927, Cys875-Cys907, Cys876-Cys909, and Cys881-Cys891. The segment at 897–914 (VYPFMWGGAYCFCDTENT) is E1 fusion peptide loop. 2 N-linked (GlcNAc...) asparagine; by host glycosylation sites follow: Asn947 and Asn1083. Intrachain disulfides connect Cys1072/Cys1084, Cys1114/Cys1189, Cys1119/Cys1193, and Cys1141/Cys1183. Residues 1226-1246 (LLGGSAVIIIIGLVLATIVAM) form a helical membrane-spanning segment. Residues 1247-1255 (YVLTNQKHN) lie on the Cytoplasmic side of the membrane.

As to quaternary structure, homodimer. Homomultimer. Interacts with host karyopherin KPNA4; this interaction allows the nuclear import of the viral capsid protein. Interacts with spike glycoprotein E2. Interacts with host IRAK1; the interaction leads to inhibition of IRAK1-dependent signaling. Part of a tetrameric complex composed of host CRM1, host importin alpha/beta dimer and the viral capsid; this complex blocks the receptor-mediated transport through the nuclear pore. Interacts with host phosphatase PPP1CA; this interaction dephosphorylates the capsid protein, which increases its ability to bind to the viral genome. In terms of assembly, the precursor of protein E3/E2 and E1 form a heterodimer shortly after synthesis. Interacts with spike glycoprotein E2. The precursor of protein E3/E2 and E1 form a heterodimer shortly after synthesis. Processing of the precursor of protein E3/E2 into E2 and E3 results in a heterodimer of the spike glycoproteins E2 and E1. Spike at virion surface are constituted of three E2-E1 heterodimers. After target cell attachment and endocytosis, E1 change conformation to form homotrimers. Interacts with 6K protein. Interacts with host LDLRAD3; this interaction mediates viral entry to the host cell. As to quaternary structure, interacts with spike glycoprotein E1. Processing of the precursor of protein E3/E2 into E2 and E3 results in a heterodimer of the spike glycoproteins E2 and E1. Spike at virion surface are constituted of a trimer of E2-E1 heterodimers. Interacts with 6K protein. Interacts with host LDLRAD3; this interaction mediates viral entry to the host cell. In terms of assembly, oligomer. Interacts with spike glycoprotein E1. Interacts with spike glycoprotein E2. In terms of processing, structural polyprotein: Specific enzymatic cleavages in vivo yield mature proteins. Capsid protein is auto-cleaved during polyprotein translation, unmasking a signal peptide at the N-terminus of the precursor of E3/E2. The remaining polyprotein is then targeted to the host endoplasmic reticulum, where host signal peptidase cleaves it into pE2, 6K and E1 proteins. pE2 is further processed to mature E3 and E2 by host furin in trans-Golgi vesicle. Phosphorylated on serine and threonine residues. Post-translationally, palmitoylated via thioester bonds. These palmitoylations may induce disruption of the C-terminus transmembrane. This would result in the reorientation of E2 C-terminus from lumenal to cytoplasmic side. In terms of processing, N-glycosylated. Palmitoylated via thioester bonds.

It is found in the virion. Its subcellular location is the host cytoplasm. The protein localises to the host cell membrane. It localises to the host nucleus. The protein resides in the virion membrane. It is found in the host Golgi apparatus. Its subcellular location is the host trans-Golgi network. The protein localises to the host endoplasmic reticulum. It carries out the reaction Autocatalytic release of the core protein from the N-terminus of the togavirus structural polyprotein by hydrolysis of a -Trp-|-Ser- bond.. Forms an icosahedral capsid with a T=4 symmetry composed of 240 copies of the capsid protein surrounded by a lipid membrane through which penetrate 80 spikes composed of trimers of E1-E2 heterodimers. The capsid protein binds to the viral RNA genome at a site adjacent to a ribosome binding site for viral genome translation following genome release. Possesses a protease activity that results in its autocatalytic cleavage from the nascent structural protein. Following its self-cleavage, the capsid protein transiently associates with ribosomes, and within several minutes the protein binds to viral RNA and rapidly assembles into icosahedric core particles. The resulting nucleocapsid eventually associates with the cytoplasmic domain of the spike glycoprotein E2 at the cell membrane, leading to budding and formation of mature virions. In case of infection, new virions attach to target cells and after clathrin-mediated endocytosis their membrane fuses with the host endosomal membrane. This leads to the release of the nucleocapsid into the cytoplasm, followed by an uncoating event necessary for the genomic RNA to become accessible. The uncoating might be triggered by the interaction of capsid proteins with ribosomes. Binding of ribosomes would release the genomic RNA since the same region is genomic RNA-binding and ribosome-binding. Specifically inhibits interleukin-1 receptor-associated kinase 1/IRAK1-dependent signaling during viral entry, representing a means by which the alphaviruses may evade innate immune detection and activation prior to viral gene expression. Inhibits host transcription. Forms a tetrameric complex with XPO1/CRM1 and the nuclear import receptor importin. This complex blocks the central channel of host nuclear pores thereby inhibiting the receptor-mediated nuclear transport and thus the host mRNA and rRNA transcription. The inhibition of transcription is linked to a cytopathic effect on the host cell. In terms of biological role, provides the signal sequence for the translocation of the precursor of protein E3/E2 to the host endoplasmic reticulum. Furin-cleaved E3 remains associated with spike glycoprotein E1 and mediates pH protection of the latter during the transport via the secretory pathway. After virion release from the host cell, the assembly protein E3 is gradually released in the extracellular space. Functionally, plays a role in viral attachment to target host cell, by binding to the cell receptor LDLRAD3. Synthesized as a p62 precursor which is processed by furin at the cell membrane just before virion budding, giving rise to E2-E1 heterodimer. The p62-E1 heterodimer is stable, whereas E2-E1 is unstable and dissociate at low pH. p62 is processed at the last step, presumably to avoid E1 fusion activation before its final export to cell surface. E2 C-terminus contains a transitory transmembrane that would be disrupted by palmitoylation, resulting in reorientation of the C-terminal tail from lumenal to cytoplasmic side. This step is critical since E2 C-terminus is involved in budding by interacting with capsid proteins. This release of E2 C-terminus in cytoplasm occurs lately in protein export, and precludes premature assembly of particles at the endoplasmic reticulum membrane. Its function is as follows. Acts as a viroporin that participates in virus glycoprotein processing and transport to the plasma membrane, cell permeabilization and budding of viral particles. Disrupts the calcium homeostasis of the cell, probably at the endoplasmic reticulum level. This leads to cytoplasmic calcium elevation. Because of its lipophilic properties, the 6K protein is postulated to influence the selection of lipids that interact with the transmembrane domains of the glycoproteins, which, in turn, affects the deformability of the bilayer required for the extreme curvature that occurs as budding proceeds. Present in low amount in virions, about 3% compared to viral glycoproteins. Class II viral fusion protein. Fusion activity is inactive as long as E1 is bound to E2 in mature virion. After virus attachment to cell receptor LDLRAD3 and endocytosis, acidification of the endosome induce dissociation of E1/E2 heterodimer and concomitant trimerization of the E1 subunits. This E1 trimer is fusion active, and promotes release of viral nucleocapsid in cytoplasm after endosome and viral membrane fusion. Efficient fusion requires the presence of cholesterol and sphingolipid in the target membrane. The protein is Structural polyprotein of Venezuelan equine encephalitis virus (strain P676) (VEEV).